A 228-amino-acid chain; its full sequence is 7-cyano-7-deazaguanine synthase (228 aa).

An ATP-binding site is contributed by 8–18; sequence LSGGLDSTTCL. The Zn(2+) site is built by Cys188, Cys198, Cys201, and Cys204.

It belongs to the QueC family. It depends on Zn(2+) as a cofactor.

It catalyses the reaction 7-carboxy-7-deazaguanine + NH4(+) + ATP = 7-cyano-7-deazaguanine + ADP + phosphate + H2O + H(+). Its pathway is purine metabolism; 7-cyano-7-deazaguanine biosynthesis. Catalyzes the ATP-dependent conversion of 7-carboxy-7-deazaguanine (CDG) to 7-cyano-7-deazaguanine (preQ(0)). This Legionella pneumophila (strain Corby) protein is 7-cyano-7-deazaguanine synthase.